A 663-amino-acid chain; its full sequence is UvrABC system protein B (663 aa).

Residues 26–414 (DGLESGLAKQ…DNVAEQVVRP (389 aa)) enclose the Helicase ATP-binding domain. 39 to 46 (GVTGSGKT) provides a ligand contact to ATP. The short motif at 92–115 (YYDYYQPEAYVPASDTFIEKDASI) is the Beta-hairpin element. The Helicase C-terminal domain occupies 430-596 (QVDDLMSEIR…GINKSVEDIL (167 aa)). Residues 624-659 (AKQINALEKQMYAHAQNMEFELAAKIRDEYLLLKEQ) form the UVR domain.

This sequence belongs to the UvrB family. In terms of assembly, forms a heterotetramer with UvrA during the search for lesions. Interacts with UvrC in an incision complex.

The protein localises to the cytoplasm. In terms of biological role, the UvrABC repair system catalyzes the recognition and processing of DNA lesions. A damage recognition complex composed of 2 UvrA and 2 UvrB subunits scans DNA for abnormalities. Upon binding of the UvrA(2)B(2) complex to a putative damaged site, the DNA wraps around one UvrB monomer. DNA wrap is dependent on ATP binding by UvrB and probably causes local melting of the DNA helix, facilitating insertion of UvrB beta-hairpin between the DNA strands. Then UvrB probes one DNA strand for the presence of a lesion. If a lesion is found the UvrA subunits dissociate and the UvrB-DNA preincision complex is formed. This complex is subsequently bound by UvrC and the second UvrB is released. If no lesion is found, the DNA wraps around the other UvrB subunit that will check the other stand for damage. The protein is UvrABC system protein B of Legionella pneumophila (strain Lens).